We begin with the raw amino-acid sequence, 178 residues long: UPF0302 protein Bcer98_1244 (178 aa).

It belongs to the UPF0302 family.

The sequence is that of UPF0302 protein Bcer98_1244 from Bacillus cytotoxicus (strain DSM 22905 / CIP 110041 / 391-98 / NVH 391-98).